Here is a 472-residue protein sequence, read N- to C-terminus: 2-oxoisovalerate dehydrogenase subunit alpha 2, mitochondrial (472 aa).

Gln185 to Arg187 is a thiamine diphosphate binding site. Ser234, Thr239, and Gln240 together coordinate K(+).

This sequence belongs to the BCKDHA family. In terms of assembly, heterotetramer of alpha and beta chains. It depends on thiamine diphosphate as a cofactor.

Its subcellular location is the mitochondrion matrix. It catalyses the reaction N(6)-[(R)-lipoyl]-L-lysyl-[protein] + 3-methyl-2-oxobutanoate + H(+) = N(6)-[(R)-S(8)-2-methylpropanoyldihydrolipoyl]-L-lysyl-[protein] + CO2. In terms of biological role, the branched-chain alpha-keto dehydrogenase complex catalyzes the overall conversion of alpha-keto acids to acyl-CoA and CO(2). It contains multiple copies of three enzymatic components: branched-chain alpha-keto acid decarboxylase (E1), lipoamide acyltransferase (E2) and lipoamide dehydrogenase (E3). In Arabidopsis thaliana (Mouse-ear cress), this protein is 2-oxoisovalerate dehydrogenase subunit alpha 2, mitochondrial.